The following is a 177-amino-acid chain: Large ribosomal subunit protein uL6 (177 aa).

Belongs to the universal ribosomal protein uL6 family. As to quaternary structure, part of the 50S ribosomal subunit.

Functionally, this protein binds to the 23S rRNA, and is important in its secondary structure. It is located near the subunit interface in the base of the L7/L12 stalk, and near the tRNA binding site of the peptidyltransferase center. This Klebsiella pneumoniae (strain 342) protein is Large ribosomal subunit protein uL6.